A 931-amino-acid chain; its full sequence is Dipeptidyl aminopeptidase A (931 aa).

The span at 1 to 13 (MSASTHSHKRKNS) shows a compositional bias: basic residues. The disordered stretch occupies residues 1–58 (MSASTHSHKRKNSHLFPQRKSSNSSMDKPFFPNNDSVANTDPQSNENGHTINEIRPTE). Topologically, residues 1–119 (MSASTHSHKR…GEWSLPEKRS (119 aa)) are cytoplasmic. Polar residues predominate over residues 33–50 (NNDSVANTDPQSNENGHT). A helical; Signal-anchor for type II membrane protein membrane pass occupies residues 120–140 (YVLVFTLIALSVLVLLVILIP). The Lumenal portion of the chain corresponds to 141–931 (SKLLPTKITR…RFDNTEVLHL (791 aa)). N-linked (GlcNAc...) asparagine glycosylation is present at asparagine 377. The Charge relay system role is filled by serine 785. Residue asparagine 814 is glycosylated (N-linked (GlcNAc...) asparagine). Active-site charge relay system residues include aspartate 863 and histidine 896.

Belongs to the peptidase S9B family.

The protein resides in the vacuole membrane. Its function is as follows. Responsible for the proteolytic maturation of the alpha-factor precursor. This Saccharomyces cerevisiae (strain ATCC 204508 / S288c) (Baker's yeast) protein is Dipeptidyl aminopeptidase A (STE13).